The chain runs to 110 residues: Glycine cleavage system H-like protein (110 aa).

Residues 10–97 (VEKVGDLYVF…PEENWLFKLD (88 aa)) enclose the Lipoyl-binding domain. The residue at position 27 (aspartate 27) is an ADP-ribosyl aspartic acid. An N6-lipoyllysine modification is found at lysine 56.

As to quaternary structure, lipoylated GcvH-L directly interacts with SAV0325, which reverses the SirTM-mediated mono-ADP-ribosylation of GcvH-L, and with the oxidoreductase SAV0322. Is lipoylated on K-56 by LplA2 (SAV0327) and then mono-ADP-ribosylated, probably on D-27, by SirTM (SAV0326). The mono-ADP-ribosylation state of GcvH-L might regulate the availability of the lipoyl moiety for redox reactions; ADP-ribosylation would inhibit the interaction of the oxidoreductase with GcvH-L when it is not required, thus ADP-ribosylation of GcvH-L might be acting to keep the response 'off' under non-stress conditions.

Functionally, may act as a carrier protein for the ROS scavenging lipoyl moiety and/or as a substrate for oxidoreductases such as SAV0322 and SAV0323. The chain is Glycine cleavage system H-like protein from Staphylococcus aureus (strain Mu50 / ATCC 700699).